Here is a 111-residue protein sequence, read N- to C-terminus: Small ribosomal subunit protein uS17 (111 aa).

This sequence belongs to the universal ribosomal protein uS17 family. In terms of assembly, part of the 30S ribosomal subunit.

In terms of biological role, one of the primary rRNA binding proteins, it binds specifically to the 5'-end of 16S ribosomal RNA. This is Small ribosomal subunit protein uS17 from Methanocella arvoryzae (strain DSM 22066 / NBRC 105507 / MRE50).